The chain runs to 100 residues: Protein translation factor SUI1 homolog (100 aa).

Belongs to the SUI1 family.

This Thermoplasma volcanium (strain ATCC 51530 / DSM 4299 / JCM 9571 / NBRC 15438 / GSS1) protein is Protein translation factor SUI1 homolog.